A 263-amino-acid polypeptide reads, in one-letter code: Purine nucleoside phosphorylase SERP0752 (263 aa).

Histidine 79, cysteine 124, and histidine 141 together coordinate Zn(2+).

The protein belongs to the purine nucleoside phosphorylase YfiH/LACC1 family. Homodimer. Cu(2+) serves as cofactor. It depends on Zn(2+) as a cofactor.

It carries out the reaction adenosine + phosphate = alpha-D-ribose 1-phosphate + adenine. The catalysed reaction is S-methyl-5'-thioadenosine + phosphate = 5-(methylsulfanyl)-alpha-D-ribose 1-phosphate + adenine. It catalyses the reaction inosine + phosphate = alpha-D-ribose 1-phosphate + hypoxanthine. The enzyme catalyses adenosine + H2O + H(+) = inosine + NH4(+). Functionally, purine nucleoside enzyme that catalyzes the phosphorolysis of adenosine and inosine nucleosides, yielding D-ribose 1-phosphate and the respective free bases, adenine and hypoxanthine. Also catalyzes the phosphorolysis of S-methyl-5'-thioadenosine into adenine and S-methyl-5-thio-alpha-D-ribose 1-phosphate. Also has adenosine deaminase activity. This chain is Purine nucleoside phosphorylase SERP0752, found in Staphylococcus epidermidis (strain ATCC 35984 / DSM 28319 / BCRC 17069 / CCUG 31568 / BM 3577 / RP62A).